A 145-amino-acid chain; its full sequence is Large ribosomal subunit protein uL15 (145 aa).

Residues 1–58 are disordered; that stretch reads MFSLLKPKGAAKRRKIVGRGPGSGLGKTSGRGQKGQKARNTSPRLGFEGGQTPLYRRL. The segment covering 19–33 has biased composition (gly residues); sequence RGPGSGLGKTSGRGQ.

This sequence belongs to the universal ribosomal protein uL15 family. In terms of assembly, part of the 50S ribosomal subunit.

Its function is as follows. Binds to the 23S rRNA. This chain is Large ribosomal subunit protein uL15, found in Borreliella afzelii (strain PKo) (Borrelia afzelii).